Consider the following 213-residue polypeptide: tRNA (guanine-N(7)-)-methyltransferase (213 aa).

Glu-44, Asp-69, Asp-96, and Asp-118 together coordinate S-adenosyl-L-methionine. Asp-118 is an active-site residue. Residue Lys-122 participates in substrate binding. Residues 124 to 129 (RHEKRR) are interaction with RNA. Substrate-binding positions include Asp-154 and 191 to 194 (TEYE).

The protein belongs to the class I-like SAM-binding methyltransferase superfamily. TrmB family.

The catalysed reaction is guanosine(46) in tRNA + S-adenosyl-L-methionine = N(7)-methylguanosine(46) in tRNA + S-adenosyl-L-homocysteine. Its pathway is tRNA modification; N(7)-methylguanine-tRNA biosynthesis. Functionally, catalyzes the formation of N(7)-methylguanine at position 46 (m7G46) in tRNA. The sequence is that of tRNA (guanine-N(7)-)-methyltransferase from Streptococcus thermophilus (strain CNRZ 1066).